The chain runs to 197 residues: Small ribosomal subunit protein uS4B (197 aa).

The S4 RNA-binding domain occupies 88-151 (CRLDNIAYRI…RKNDEFADNF (64 aa)).

The protein belongs to the universal ribosomal protein uS4 family. Part of the 30S ribosomal subunit. Contacts protein S5. The interaction surface between S4 and S5 is involved in control of translational fidelity.

In terms of biological role, one of the primary rRNA binding proteins, it binds directly to 16S rRNA where it nucleates assembly of the body of the 30S subunit. Its function is as follows. With S5 and S12 plays an important role in translational accuracy. The protein is Small ribosomal subunit protein uS4B of Clostridium botulinum (strain Langeland / NCTC 10281 / Type F).